We begin with the raw amino-acid sequence, 201 residues long: 3-isopropylmalate dehydratase small subunit (201 aa).

The protein belongs to the LeuD family. LeuD type 1 subfamily. As to quaternary structure, heterodimer of LeuC and LeuD.

It catalyses the reaction (2R,3S)-3-isopropylmalate = (2S)-2-isopropylmalate. It functions in the pathway amino-acid biosynthesis; L-leucine biosynthesis; L-leucine from 3-methyl-2-oxobutanoate: step 2/4. Catalyzes the isomerization between 2-isopropylmalate and 3-isopropylmalate, via the formation of 2-isopropylmaleate. The sequence is that of 3-isopropylmalate dehydratase small subunit from Salmonella paratyphi A (strain ATCC 9150 / SARB42).